The chain runs to 320 residues: Tyrosine recombinase Synpcc7942_B2651 (320 aa).

One can recognise a Core-binding (CB) domain in the interval 16-106 (VQDWDVLQML…ALKSLVRFSR (91 aa)). The region spanning 127 to 313 (RDTTGTTPER…RQDFQGECTE (187 aa)) is the Tyr recombinase domain. Active-site residues include R167, K193, H264, R267, and H291. Y300 serves as the catalytic O-(3'-phospho-DNA)-tyrosine intermediate.

Belongs to the 'phage' integrase family.

The protein resides in the cytoplasm. In terms of biological role, site-specific tyrosine recombinase, which acts by catalyzing the cutting and rejoining of the recombining DNA molecules. This is Tyrosine recombinase Synpcc7942_B2651 from Synechococcus elongatus (strain ATCC 33912 / PCC 7942 / FACHB-805) (Anacystis nidulans R2).